Here is a 480-residue protein sequence, read N- to C-terminus: UDP-N-acetylmuramate--L-alanine ligase (480 aa).

129–135 is an ATP binding site; sequence GSHGKTT.

Belongs to the MurCDEF family.

It is found in the cytoplasm. The catalysed reaction is UDP-N-acetyl-alpha-D-muramate + L-alanine + ATP = UDP-N-acetyl-alpha-D-muramoyl-L-alanine + ADP + phosphate + H(+). Its pathway is cell wall biogenesis; peptidoglycan biosynthesis. Functionally, cell wall formation. This chain is UDP-N-acetylmuramate--L-alanine ligase, found in Syntrophus aciditrophicus (strain SB).